Reading from the N-terminus, the 308-residue chain is Mycothiol acetyltransferase (308 aa).

N-acetyltransferase domains follow at residues 16 to 152 (ETLA…RPLA) and 165 to 308 (VTVR…RTES). E47 is a 1D-myo-inositol 2-(L-cysteinylamino)-2-deoxy-alpha-D-glucopyranoside binding site. 91–93 (LVV) contacts acetyl-CoA. Positions 192, 231, and 240 each coordinate 1D-myo-inositol 2-(L-cysteinylamino)-2-deoxy-alpha-D-glucopyranoside. Residues 244-246 (LGV) and 251-257 (QGGGLGK) each bind acetyl-CoA. Y278 is a binding site for 1D-myo-inositol 2-(L-cysteinylamino)-2-deoxy-alpha-D-glucopyranoside.

Belongs to the acetyltransferase family. MshD subfamily. Monomer.

The enzyme catalyses 1D-myo-inositol 2-(L-cysteinylamino)-2-deoxy-alpha-D-glucopyranoside + acetyl-CoA = mycothiol + CoA + H(+). Catalyzes the transfer of acetyl from acetyl-CoA to desacetylmycothiol (Cys-GlcN-Ins) to form mycothiol. This Streptomyces avermitilis (strain ATCC 31267 / DSM 46492 / JCM 5070 / NBRC 14893 / NCIMB 12804 / NRRL 8165 / MA-4680) protein is Mycothiol acetyltransferase.